The primary structure comprises 36 residues: Photosystem I reaction center subunit VIII (36 aa).

A helical membrane pass occupies residues 6–28 (LPSIFVPLVGLLFPAIAMVSLFF).

The protein belongs to the PsaI family.

The protein resides in the plastid. Its subcellular location is the chloroplast thylakoid membrane. May help in the organization of the PsaL subunit. In Nymphaea alba (White water-lily), this protein is Photosystem I reaction center subunit VIII.